The primary structure comprises 72 residues: UPF0352 protein swp_2271 (72 aa).

The protein belongs to the UPF0352 family.

The sequence is that of UPF0352 protein swp_2271 from Shewanella piezotolerans (strain WP3 / JCM 13877).